A 598-amino-acid polypeptide reads, in one-letter code: Elongation factor 4 (598 aa).

Residues 4 to 186 (SHIRNFSIIA…VIVNKIPPPE (183 aa)) form the tr-type G domain. GTP contacts are provided by residues 16–21 (DHGKST) and 133–136 (NKID).

The protein belongs to the TRAFAC class translation factor GTPase superfamily. Classic translation factor GTPase family. LepA subfamily.

Its subcellular location is the cell inner membrane. The catalysed reaction is GTP + H2O = GDP + phosphate + H(+). In terms of biological role, required for accurate and efficient protein synthesis under certain stress conditions. May act as a fidelity factor of the translation reaction, by catalyzing a one-codon backward translocation of tRNAs on improperly translocated ribosomes. Back-translocation proceeds from a post-translocation (POST) complex to a pre-translocation (PRE) complex, thus giving elongation factor G a second chance to translocate the tRNAs correctly. Binds to ribosomes in a GTP-dependent manner. This is Elongation factor 4 from Alteromonas mediterranea (strain DSM 17117 / CIP 110805 / LMG 28347 / Deep ecotype).